Reading from the N-terminus, the 89-residue chain is Small ribosomal subunit protein uS15 (89 aa).

Positions 1-23 (MALTKERTASVVQQYGSGEKDTG) are disordered.

The protein belongs to the universal ribosomal protein uS15 family. In terms of assembly, part of the 30S ribosomal subunit. Forms a bridge to the 50S subunit in the 70S ribosome, contacting the 23S rRNA.

Its function is as follows. One of the primary rRNA binding proteins, it binds directly to 16S rRNA where it helps nucleate assembly of the platform of the 30S subunit by binding and bridging several RNA helices of the 16S rRNA. Forms an intersubunit bridge (bridge B4) with the 23S rRNA of the 50S subunit in the ribosome. This Treponema pallidum (strain Nichols) protein is Small ribosomal subunit protein uS15.